Consider the following 104-residue polypeptide: L-rhamnose mutarotase (104 aa).

Tyrosine 18 is a substrate binding site. Histidine 22 acts as the Proton donor in catalysis. Substrate is bound by residues tyrosine 41 and 76–77; that span reads WW.

It belongs to the rhamnose mutarotase family. Homodimer.

It localises to the cytoplasm. The catalysed reaction is alpha-L-rhamnose = beta-L-rhamnose. Its pathway is carbohydrate metabolism; L-rhamnose metabolism. Involved in the anomeric conversion of L-rhamnose. The sequence is that of L-rhamnose mutarotase from Sinorhizobium medicae (strain WSM419) (Ensifer medicae).